The primary structure comprises 447 residues: UDP-N-acetylmuramate--L-alanine ligase (447 aa).

Glycine 108–serine 114 is a binding site for ATP.

Belongs to the MurCDEF family.

Its subcellular location is the cytoplasm. The enzyme catalyses UDP-N-acetyl-alpha-D-muramate + L-alanine + ATP = UDP-N-acetyl-alpha-D-muramoyl-L-alanine + ADP + phosphate + H(+). It participates in cell wall biogenesis; peptidoglycan biosynthesis. Cell wall formation. The chain is UDP-N-acetylmuramate--L-alanine ligase from Listeria monocytogenes serovar 1/2a (strain ATCC BAA-679 / EGD-e).